The following is a 367-amino-acid chain: Calcium uniporter protein, mitochondrial (367 aa).

Residues 1 to 12 constitute a mitochondrion transit peptide; it reads MAMPRVLCRVRL. The Mitochondrial matrix portion of the chain corresponds to 13–232; that stretch reads LIHNDFSVIS…LEEKKLELEQ (220 aa). Residues 61–80 form a disordered region; sequence KQDASSSSSDSDSSDSDEDD. Residues 199–233 adopt a coiled-coil conformation; that stretch reads REHQLQKEVELTTQLETLQQELLPLEEKKLELEQV. The chain crosses the membrane as a helical span at residues 233-253; the sequence is VANRRSNWMAWAGLGLMSVQF. The Mitochondrial intermembrane segment spans residues 254–262; the sequence is GILARLTWW. Residues 263 to 284 traverse the membrane as a helical segment; the sequence is EYSWDIMEPVTYFVTYGTAMAA. The short motif at 266-276 is the Selectivity filter element; it reads WDIMEPVTYFV. Glu270 is a Ca(2+) binding site. The Mitochondrial matrix portion of the chain corresponds to 285–367; sequence YAYFVLTREE…KKQVEEKAKE (83 aa).

Belongs to the MCU (TC 1.A.77) family. As to quaternary structure, homotetramer. Component of the uniplex complex, composed of MCU, EMRE, MICU1 and MICU2 in a 4:4:1:1 stoichiometry.

The protein localises to the mitochondrion inner membrane. It carries out the reaction Ca(2+)(in) = Ca(2+)(out). With respect to regulation, MCU channel activity is regulated by the heterodimer composed of MICU1 and MICU2, which act as calcium-sensors. At low calcium levels, MICU1 occludes the pore of the MCU channel, preventing mitochondrial calcium uptake. At higher calcium levels, calcium-binding to MICU1 and MICU2 induces a conformational change that weakens MCU-MICU1 interactions and moves the MICU1-MICU2 heterodimer away from the pore, allowing calcium permeation through the channel. In terms of biological role, channel-forming and calcium-conducting subunit of the mitochondrial inner membrane calcium uniporter complex (uniplex), which mediates calcium uptake into the mitochondrial matrix. MCU channel activity is regulated by the calcium-sensor subunits of the uniplex MICU1 and MICU2. Mitochondrial calcium homeostasis plays key roles in cellular physiology and regulates ATP production, cytoplasmic calcium signals and activation of cell death pathways. This is Calcium uniporter protein, mitochondrial from Tribolium castaneum (Red flour beetle).